The sequence spans 83 residues: Cytochrome b559 subunit alpha (83 aa).

A helical membrane pass occupies residues 21–35 (VIHSITIPSLFIAGW). Residue His23 participates in heme binding.

Belongs to the PsbE/PsbF family. As to quaternary structure, heterodimer of an alpha subunit and a beta subunit. PSII is composed of 1 copy each of membrane proteins PsbA, PsbB, PsbC, PsbD, PsbE, PsbF, PsbH, PsbI, PsbJ, PsbK, PsbL, PsbM, PsbT, PsbX, PsbY, PsbZ, Psb30/Ycf12, at least 3 peripheral proteins of the oxygen-evolving complex and a large number of cofactors. It forms dimeric complexes. The cofactor is heme b.

It localises to the plastid. It is found in the chloroplast thylakoid membrane. This b-type cytochrome is tightly associated with the reaction center of photosystem II (PSII). PSII is a light-driven water:plastoquinone oxidoreductase that uses light energy to abstract electrons from H(2)O, generating O(2) and a proton gradient subsequently used for ATP formation. It consists of a core antenna complex that captures photons, and an electron transfer chain that converts photonic excitation into a charge separation. The chain is Cytochrome b559 subunit alpha from Piper cenocladum (Ant piper).